A 393-amino-acid polypeptide reads, in one-letter code: Acetate kinase (393 aa).

Asparagine 7 contacts Mg(2+). Position 14 (lysine 14) interacts with ATP. Arginine 90 contributes to the substrate binding site. The active-site Proton donor/acceptor is aspartate 147. ATP is bound by residues 205-209 (HLGNG), 280-282 (DFR), and 328-332 (GIGEN). A Mg(2+)-binding site is contributed by glutamate 380.

This sequence belongs to the acetokinase family. As to quaternary structure, homodimer. Mg(2+) serves as cofactor. Requires Mn(2+) as cofactor.

It is found in the cytoplasm. It catalyses the reaction acetate + ATP = acetyl phosphate + ADP. The protein operates within metabolic intermediate biosynthesis; acetyl-CoA biosynthesis; acetyl-CoA from acetate: step 1/2. Its function is as follows. Catalyzes the formation of acetyl phosphate from acetate and ATP. Can also catalyze the reverse reaction. The polypeptide is Acetate kinase (Finegoldia magna (strain ATCC 29328 / DSM 20472 / WAL 2508) (Peptostreptococcus magnus)).